A 393-amino-acid chain; its full sequence is S-adenosylmethionine synthase 1 (393 aa).

Position 9 (Glu-9) interacts with Mg(2+). His-15 contacts ATP. Glu-43 is a K(+) binding site. L-methionine is bound by residues Glu-56 and Gln-99. ATP contacts are provided by residues 167 to 169 (DGK), 235 to 238 (SGRF), Asp-246, 252 to 253 (RK), Ala-269, Lys-273, and Lys-277. Asp-246 contacts L-methionine. Residue Lys-277 coordinates L-methionine.

Belongs to the AdoMet synthase family. As to quaternary structure, homotetramer. The cofactor is Mn(2+). Mg(2+) is required as a cofactor. Requires Co(2+) as cofactor. K(+) serves as cofactor. As to expression, mostly expressed in stems.

The protein localises to the cytoplasm. The enzyme catalyses L-methionine + ATP + H2O = S-adenosyl-L-methionine + phosphate + diphosphate. It participates in amino-acid biosynthesis; S-adenosyl-L-methionine biosynthesis; S-adenosyl-L-methionine from L-methionine: step 1/1. In terms of biological role, catalyzes the formation of S-adenosylmethionine from methionine and ATP. The reaction comprises two steps that are both catalyzed by the same enzyme: formation of S-adenosylmethionine (AdoMet) and triphosphate, and subsequent hydrolysis of the triphosphate. The chain is S-adenosylmethionine synthase 1 (SAM1) from Solanum lycopersicum (Tomato).